The primary structure comprises 711 residues: Toxin RTX-III translocation ATP-binding protein (711 aa).

In terms of domain architecture, Peptidase C39 spans 1 to 129 (MESQMPFNEK…EIFQGGMILI (129 aa)). Residue His-87 is part of the active site. Residues 158–440 (FVETIIVSIF…LAQLWQDFQQ (283 aa)) form the ABC transmembrane type-1 domain. The next 5 membrane-spanning stretches (helical) occupy residues 162–182 (IIVS…FQVV), 195–215 (LNVI…LSGL), 273–293 (ALTS…MWYY), 299–319 (IVIL…SPIL), and 392–412 (VMII…LSIG). The 236-residue stretch at 472-707 (IAFKHIRFRY…ENGLYYYLNQ (236 aa)) folds into the ABC transporter domain. 506–513 (GRSGSGKS) contacts ATP.

It belongs to the ABC transporter superfamily. Protein-1 exporter (TC 3.A.1.109) family. Homodimer.

It localises to the cell membrane. Functionally, involved in the transport of the toxin RTX-III. The protein is Toxin RTX-III translocation ATP-binding protein (apxIIIB) of Actinobacillus pleuropneumoniae (Haemophilus pleuropneumoniae).